The following is a 104-amino-acid chain: uncharacterized protein (104 aa).

This is an uncharacterized protein from Bacillus subtilis (strain 168).